Here is a 249-residue protein sequence, read N- to C-terminus: 2,3-bisphosphoglycerate-dependent phosphoglycerate mutase (249 aa).

Substrate contacts are provided by residues 8–15 (RHGQSVWN), 21–22 (TG), Arg60, 87–90 (ERHY), Lys98, 114–115 (RR), and 183–184 (GN). The active-site Tele-phosphohistidine intermediate is His9. Residue Glu87 is the Proton donor/acceptor of the active site.

The protein belongs to the phosphoglycerate mutase family. BPG-dependent PGAM subfamily. In terms of assembly, homodimer.

It carries out the reaction (2R)-2-phosphoglycerate = (2R)-3-phosphoglycerate. It functions in the pathway carbohydrate degradation; glycolysis; pyruvate from D-glyceraldehyde 3-phosphate: step 3/5. In terms of biological role, catalyzes the interconversion of 2-phosphoglycerate and 3-phosphoglycerate. The polypeptide is 2,3-bisphosphoglycerate-dependent phosphoglycerate mutase (Solidesulfovibrio magneticus (strain ATCC 700980 / DSM 13731 / RS-1) (Desulfovibrio magneticus)).